Consider the following 213-residue polypeptide: Heterochromatin protein 1 (213 aa).

Disordered stretches follow at residues 1-24 (MGKK…EEEY) and 74-151 (RKDE…TGFD). In terms of domain architecture, Chromo 1 spans 24 to 82 (YAVEKILDRRVRKGKVEYYLKWKGYAETENTWEPEGNLDCQDLIQQYELSRKDEANAAA). Basic and acidic residues predominate over residues 89–104 (SKKERPGSSTKVKETG). Residues 105-115 (RTSTTASNSSG) show a composition bias toward polar residues. One can recognise a Chromo 2 domain in the interval 154–212 (LEAEKILGASDNNGRLTFLIQFKGVDQAEMVPSTVANVKIPQMVIRFYEERLSWYSDNE).

It is found in the nucleus. Structural component of heterochromatin, involved in gene repression and the modification of position-effect-variegation. Recognizes and binds histone H3 tails methylated at 'Lys-9', leading to epigenetic repression. The sequence is that of Heterochromatin protein 1 (HP1A) from Drosophila virilis (Fruit fly).